The sequence spans 37 residues: Cytochrome b6-f complex subunit 5 (37 aa).

The chain crosses the membrane as a helical span at residues 5–25; it reads LLSGIVLGLIPITLAGLFVTA.

This sequence belongs to the PetG family. The 4 large subunits of the cytochrome b6-f complex are cytochrome b6, subunit IV (17 kDa polypeptide, PetD), cytochrome f and the Rieske protein, while the 4 small subunits are PetG, PetL, PetM and PetN. The complex functions as a dimer.

It localises to the plastid. The protein resides in the chloroplast thylakoid membrane. Its function is as follows. Component of the cytochrome b6-f complex, which mediates electron transfer between photosystem II (PSII) and photosystem I (PSI), cyclic electron flow around PSI, and state transitions. PetG is required for either the stability or assembly of the cytochrome b6-f complex. The chain is Cytochrome b6-f complex subunit 5 from Chara vulgaris (Common stonewort).